A 556-amino-acid polypeptide reads, in one-letter code: Phospholipase D (556 aa).

The first 47 residues, 1–47, serve as a signal peptide directing secretion; sequence MTSDQRPARLPTHKGKLLAPHRLHRLIPVSVALTTVCAALPSSTAYA. In terms of domain architecture, PLD phosphodiesterase 1 spans 210–237; the sequence is SLSWNHSKLLVVDGKTAITGGINGWKDD. The disordered stretch occupies residues 326 to 360; it reads SDPSSGYHPDLPTAPDTKCTVGLHDNTNADRDYDT. In terms of domain architecture, PLD phosphodiesterase 2 spans 484-511; that stretch reads KPYALHHKLVSVDDSAFYIGSKNLYPAW.

It belongs to the phospholipase D family. Probably has at least 1 disulfide bond.

Its subcellular location is the secreted. It carries out the reaction a 1,2-diacyl-sn-glycero-3-phosphocholine + H2O = a 1,2-diacyl-sn-glycero-3-phosphate + choline + H(+). Inhibited by mercaptoethanol and dithiothreitol. In terms of biological role, a reversible phospholipase active on phosphatidylcholine (PC) and phosphatidylethanolamine. Lysophosphatidylcholine and egg sphingomyelin are hydrolyzed about 50 times and 100 times more slowly than PC, respectively. During the transphosphatidylation reaction straight-chain hydroxy compounds, such as triethyleneglycol and triethyleneglycol monomethyl ether, were phosphatidylated in good yield, as were monosaccharides. Disaccharides and sugar alcohol reacted slowly, while N-acetyl-D-galactosamine, D-galactosamine and D-galacturonic acid were not phosphatidylated. This is Phospholipase D from Streptomyces antibioticus.